An 811-amino-acid chain; its full sequence is DNA mismatch repair protein MutS (811 aa).

Position 583 to 590 (583 to 590) interacts with ATP; it reads GPNMAGKS.

Belongs to the DNA mismatch repair MutS family.

In terms of biological role, this protein is involved in the repair of mismatches in DNA. It is possible that it carries out the mismatch recognition step. This protein has a weak ATPase activity. The polypeptide is DNA mismatch repair protein MutS (Thermus thermophilus (strain ATCC BAA-163 / DSM 7039 / HB27)).